The chain runs to 362 residues: MKPSIYSLTRQEMIEWAEAQGEKKFRAAQIWEWLYRKRVQSFEEMTNLSKDLIAKLNDQFVVNPLKQRIVQESADGTVKYLFELPDGMLIETVLMRQHYGLSVCVTTQVGCNIGCTFCASGLIKKQRDLNNGEIVAQIMLVQKYFDERGQDERVSHIVVMGIGEPFDNYDNVLKFVRTVNDDKGLAIGARHITVSTSGLAHKIRDFANEGVQVNLAVSLHAPNNDLRTSIMRINRSFPIEKLFAAIEYYIETTNRRVTFEYIMLNEVNDGVEQAKELAELLKNIKKLSYVNLIPYNPVSEHDQYSRSPKERVMAFYDTLKKNGVNCVVRQEHGTDIDAACGQLRSNTMKRDREKALVENVQP.

The Proton acceptor role is filled by glutamate 91. Residues 97-329 (QHYGLSVCVT…KKNGVNCVVR (233 aa)) enclose the Radical SAM core domain. The cysteines at positions 104 and 340 are disulfide-linked. Residues cysteine 111, cysteine 115, and cysteine 118 each contribute to the [4Fe-4S] cluster site. S-adenosyl-L-methionine is bound by residues 163–164 (GE), serine 195, 218–220 (SLH), and asparagine 296. Residue cysteine 340 is the S-methylcysteine intermediate of the active site.

The protein belongs to the radical SAM superfamily. RlmN family. Requires [4Fe-4S] cluster as cofactor.

The protein resides in the cytoplasm. The catalysed reaction is adenosine(2503) in 23S rRNA + 2 reduced [2Fe-2S]-[ferredoxin] + 2 S-adenosyl-L-methionine = 2-methyladenosine(2503) in 23S rRNA + 5'-deoxyadenosine + L-methionine + 2 oxidized [2Fe-2S]-[ferredoxin] + S-adenosyl-L-homocysteine. It carries out the reaction adenosine(37) in tRNA + 2 reduced [2Fe-2S]-[ferredoxin] + 2 S-adenosyl-L-methionine = 2-methyladenosine(37) in tRNA + 5'-deoxyadenosine + L-methionine + 2 oxidized [2Fe-2S]-[ferredoxin] + S-adenosyl-L-homocysteine. Functionally, specifically methylates position 2 of adenine 2503 in 23S rRNA and position 2 of adenine 37 in tRNAs. This is Probable dual-specificity RNA methyltransferase RlmN from Streptococcus sanguinis (strain SK36).